Reading from the N-terminus, the 120-residue chain is Insulin-like peptide 3 (120 aa).

Residues 1–29 form the signal peptide; the sequence is MGIEMRCQDRRILLPSLLLLILMIGGVQA. Cystine bridges form between C34/C101, C46/C114, and C100/C105. Residues 51 to 89 constitute a propeptide, connecting peptide; sequence NAMTKRTLDPVNFNQIDGFEDRSLLERLLSDSSVQMLKT.

The protein belongs to the insulin family. In terms of assembly, heterodimer of a B chain and an A chain linked by two disulfide bonds. In terms of tissue distribution, expressed at a high level in seven cells of each larval brain hemisphere that may correspond to neurosecretory cells.

It is found in the secreted. Possible ligand of InR/insulin-like receptor. The sequence is that of Insulin-like peptide 3 from Drosophila melanogaster (Fruit fly).